Here is a 73-residue protein sequence, read N- to C-terminus: MAKKDGAIEVEGRVVEPLPNAMFRIELENGHKVLAHISGKMRQHYIRILPEDRVVVELSPYDLTRGRIVYRYK.

The region spanning 1 to 73 (MAKKDGAIEV…TRGRIVYRYK (73 aa)) is the S1-like domain.

The protein belongs to the IF-1 family. As to quaternary structure, component of the 30S ribosomal translation pre-initiation complex which assembles on the 30S ribosome in the order IF-2 and IF-3, IF-1 and N-formylmethionyl-tRNA(fMet); mRNA recruitment can occur at any time during PIC assembly.

It is found in the cytoplasm. In terms of biological role, one of the essential components for the initiation of protein synthesis. Stabilizes the binding of IF-2 and IF-3 on the 30S subunit to which N-formylmethionyl-tRNA(fMet) subsequently binds. Helps modulate mRNA selection, yielding the 30S pre-initiation complex (PIC). Upon addition of the 50S ribosomal subunit IF-1, IF-2 and IF-3 are released leaving the mature 70S translation initiation complex. The protein is Translation initiation factor IF-1 of Mycolicibacterium gilvum (strain PYR-GCK) (Mycobacterium gilvum (strain PYR-GCK)).